Reading from the N-terminus, the 860-residue chain is Probable linoleate 9S-lipoxygenase 4 (860 aa).

One can recognise a PLAT domain in the interval 29-159 (NALDFTDLAG…RYKSDRIFFA (131 aa)). One can recognise a Lipoxygenase domain in the interval 162-860 (PYLPSETPEL…GKGIPNSVSI (699 aa)). Residues 209 to 246 (PDQGKENVRTTLGGSADYPYPRRGRTGRPPTRTDPKSE) are disordered. Fe cation contacts are provided by His521, His526, His712, Asn716, and Ile860.

This sequence belongs to the lipoxygenase family. In terms of assembly, monomer. Requires Fe cation as cofactor. As to expression, expressed in tubers and roots. Not detected in leaves, flowers, stems, shoot tips, or axillary buds.

It localises to the cytoplasm. The enzyme catalyses (9Z,12Z)-octadecadienoate + O2 = (9S)-hydroperoxy-(10E,12Z)-octadecadienoate. It functions in the pathway lipid metabolism; oxylipin biosynthesis. Functionally, plant lipoxygenases may be involved in a number of diverse aspects of plant physiology including growth and development, pest resistance, and senescence or responses to wounding. Catalyzes the hydroperoxidation of lipids containing a cis,cis-1,4-pentadiene structure. This is Probable linoleate 9S-lipoxygenase 4 (LOX1.4) from Solanum tuberosum (Potato).